Here is a 1997-residue protein sequence, read N- to C-terminus: Nucleoprotein TPR (1997 aa).

Coiled coils occupy residues 1–36 (QEQH…NDLL), 101–277 (EIVK…HQMT), 335–1103 (DSTE…IKTI), and 1129–1305 (AEAS…EPQE). 2 stretches are compositionally biased toward basic and acidic residues: residues 672–702 (SSEY…KTVE) and 1290–1305 (REQQ…EPQE). Disordered stretches follow at residues 672–706 (SSEY…QMEQ), 1290–1352 (REQQ…AAVP), 1438–1529 (AFVQ…KTET), 1561–1752 (IQTS…RRQS), 1795–1832 (AIHS…ASQG), and 1870–1997 (ENPA…RSNI). Composition is skewed to polar residues over residues 1306 to 1321 (TTRI…QPTT), 1328 to 1347 (SANT…SKVT), and 1446 to 1487 (SHAT…SSSI). The segment covering 1511–1529 (DQQRTKKRKEEDIEEKTET) has biased composition (basic and acidic residues). Residues 1561-1587 (IQTSQVIESQAPEQLQNVQSTQDSLQD) show a composition bias toward polar residues. Acidic residues-rich tracts occupy residues 1601–1637 (SDEE…DSNE) and 1644–1667 (GNED…ETED). 3 stretches are compositionally biased toward polar residues: residues 1692 to 1709 (AEST…SASD), 1817 to 1830 (QASS…QLAS), and 1879 to 1899 (HASQ…TSVD). Residues 1902–1915 (AADEGDEVFVEAES) are compositionally biased toward acidic residues. Residues 1950-1959 (SSSIADTSSS) are compositionally biased toward low complexity.

This sequence belongs to the TPR family. Homodimer. Part of the nuclear pore complex (NPC). Interacts with nuclear receptor KPNB1; the interaction occurs in a RanGTP-dependent manner. Associates with the Importin alpha/Importin beta receptor. As to expression, expressed in epithelial cells, oocytes and egg (at protein level).

The protein localises to the nucleus. It is found in the nucleus membrane. It localises to the nucleus envelope. The protein resides in the nuclear pore complex. Its subcellular location is the cytoplasm. The protein localises to the cytoskeleton. It is found in the spindle. It localises to the chromosome. The protein resides in the centromere. Its subcellular location is the kinetochore. Its function is as follows. Component of the nuclear pore complex (NPC), a complex required for the trafficking across the nuclear envelope. Functions as a scaffolding element in the nuclear phase of the NPC essential for normal nucleocytoplasmic transport of proteins and mRNAs, plays a role in the establishment of nuclear-peripheral chromatin compartmentalization in interphase, and in the mitotic spindle checkpoint signaling during mitosis. Involved in the quality control and retention of unspliced mRNAs in the nucleus. Implicated in nuclear export of mRNAs transcribed from heat shock gene promoters. May play a limited role in the regulation of nuclear protein export. May be involved in the formation and/or maintenance of NPC-associated perinuclear heterochromatin exclusion zones (HEZs). Finally, may act as a spatial regulator of the spindle-assembly checkpoint (SAC) response. This Xenopus laevis (African clawed frog) protein is Nucleoprotein TPR.